We begin with the raw amino-acid sequence, 473 residues long: MKTDNSTFLAQQIVRLRRRDQIRRLMQRDKTPLAILFMAAVVGTLTGLVGVAFEKAVSWVQNMRIGALVQVADHAFLLWPLAFILSALLAMVGYFLVRKFAPEAGGSGIPEIEGALEELRPVRWWRVLPVKFIGGMGTLGAGMVLGREGPTVQIGGNLGRMVLDVFRMRSAEARHTLLATGAAAGLSAAFNAPLAGILFIIEEMRPQFRYNLISIKAVFTGVIMSSIVFRIFNGEAPIIEVGKLSDAPVNTLWLYLILGIIFGCVGPVFNSLVLRTQDMFQRFHGGEIKKWVLMGGAIGGLCGILGLIEPEAAGGGFNLIPIAAAGNFSVGLLLFIFITRVVTTLLCFSSGAPGGIFAPMLALGTLLGTAFGMAAAVLFPQYHLEAGTFAIAGMGALMAASVRAPLTGIVLVLEMTDNYQLILPMIITCLGATLLAQFLGGKPLYSTILARTLAKQDAEQAAKNQNAPAGENT.

At 1–32 (MKTDNSTFLAQQIVRLRRRDQIRRLMQRDKTP) the chain is on the cytoplasmic side. Residues 33–69 (LAILFMAAVVGTLTGLVGVAFEKAVSWVQNMRIGALV) traverse the membrane as a helical segment. The Periplasmic segment spans residues 70 to 76 (QVADHAF). A helical transmembrane segment spans residues 77–100 (LLWPLAFILSALLAMVGYFLVRKF). The Selectivity filter part_1 motif lies at 106-110 (GSGIP). Ser107 contributes to the chloride binding site. An intramembrane region (helical) is located at residues 109 to 116 (IPEIEGAL). The Cytoplasmic segment spans residues 117 to 123 (EELRPVR). Helical transmembrane passes span 124 to 141 (WWRVLPVKFIGGMGTLGA) and 148 to 166 (EGPTVQIGGNLGRMVLDVF). A Selectivity filter part_2 motif is present at residues 146–150 (GREGP). Over 167–176 (RMRSAEARHT) the chain is Cytoplasmic. 2 consecutive intramembrane regions (helical) follow at residues 177–189 (LLATGAAAGLSAA) and 193–201 (PLAGILFII). Over 202 to 214 (EEMRPQFRYNLIS) the chain is Cytoplasmic. Residues 215 to 232 (IKAVFTGVIMSSIVFRIF) traverse the membrane as a helical segment. Residues 233 to 252 (NGEAPIIEVGKLSDAPVNTL) lie on the Periplasmic side of the membrane. Residues 253 to 281 (WLYLILGIIFGCVGPVFNSLVLRTQDMFQ) traverse the membrane as a helical segment. At 282–287 (RFHGGE) the chain is on the cytoplasmic side. The helical transmembrane segment at 288–309 (IKKWVLMGGAIGGLCGILGLIE) threads the bilayer. Over 310–329 (PEAAGGGFNLIPIAAAGNFS) the chain is Periplasmic. The next 2 helical transmembrane spans lie at 330–349 (VGLLLFIFITRVVTTLLCFS) and 355–376 (GIFAPMLALGTLLGTAFGMAAA). Positions 355–359 (GIFAP) match the Selectivity filter part_3 motif. Positions 356 and 357 each coordinate chloride. Residues 377–386 (VLFPQYHLEA) lie on the Periplasmic side of the membrane. The segment at residues 387–401 (GTFAIAGMGALMAAS) is an intramembrane region (helical). The segment at residues 402 to 404 (VRA) is an intramembrane region (note=Loop between two helices). The segment at residues 405–416 (PLTGIVLVLEMT) is an intramembrane region (helical). An intramembrane region (note=Loop between two helices) is located at residues 417-421 (DNYQL). The helical transmembrane segment at 422-438 (ILPMIITCLGATLLAQF) threads the bilayer. Over 439–473 (LGGKPLYSTILARTLAKQDAEQAAKNQNAPAGENT) the chain is Cytoplasmic. Tyr445 serves as a coordination point for chloride.

The protein belongs to the chloride channel (TC 2.A.49) family. ClcA subfamily. As to quaternary structure, homodimer.

It is found in the cell inner membrane. It catalyses the reaction 2 chloride(in) + H(+)(out) = 2 chloride(out) + H(+)(in). In terms of biological role, proton-coupled chloride transporter. Functions as antiport system and exchanges two chloride ions for 1 proton. Probably acts as an electrical shunt for an outwardly-directed proton pump that is linked to amino acid decarboxylation, as part of the extreme acid resistance (XAR) response. The polypeptide is H(+)/Cl(-) exchange transporter ClcA (Salmonella schwarzengrund (strain CVM19633)).